The primary structure comprises 1391 residues: ESX-5 secretion system protein EccC5 (1391 aa).

2 consecutive transmembrane segments (helical) span residues 38–58 and 65–85; these read WLIV…AMVF and FGGI…MMMF. FtsK domains are found at residues 476–678, 858–1052, and 1161–1354; these read GELL…GAAQ, QPPW…EDAK, and LAPV…DPDE. ATP contacts are provided by residues 499–506, 876–883, and 1178–1185; these read GTTGSGKS, GAGGSGKT, and GRRECGRT.

As to quaternary structure, part of the ESX-5 / type VII secretion system (T7SS), which is composed of cytosolic and membrane components. The ESX-5 membrane complex is composed of EccB5, EccC5, EccD5 and EccE5.

It is found in the cell inner membrane. In terms of biological role, part of the ESX-5 specialized secretion system, which is responsible for the secretion of EsxN and a number of PE_PGRS and PPE proteins, including PPE41. The sequence is that of ESX-5 secretion system protein EccC5 from Mycobacterium tuberculosis (strain CDC 1551 / Oshkosh).